The following is a 430-amino-acid chain: Dihydroorotase (430 aa).

Positions 57 and 59 each coordinate Zn(2+). Residues His-59–Arg-61 and Asn-91 contribute to the substrate site. Zn(2+) is bound by residues Asp-151, His-178, and His-231. Asn-277 provides a ligand contact to substrate. Asp-304 contacts Zn(2+). Residue Asp-304 is part of the active site. Substrate is bound by residues His-308 and Pro-322–Gly-323.

Belongs to the metallo-dependent hydrolases superfamily. DHOase family. Class I DHOase subfamily. It depends on Zn(2+) as a cofactor.

The catalysed reaction is (S)-dihydroorotate + H2O = N-carbamoyl-L-aspartate + H(+). It functions in the pathway pyrimidine metabolism; UMP biosynthesis via de novo pathway; (S)-dihydroorotate from bicarbonate: step 3/3. In terms of biological role, catalyzes the reversible cyclization of carbamoyl aspartate to dihydroorotate. The sequence is that of Dihydroorotase from Mycobacterium bovis (strain ATCC BAA-935 / AF2122/97).